A 641-amino-acid chain; its full sequence is Anthrax toxin receptor-like (641 aa).

The signal sequence occupies residues 1–27 (MMSHSPSMPCSALFLLLLLLLPPTFKG). The Extracellular segment spans residues 28–363 (GSLRYHGPGW…ASQGIVFKRT (336 aa)). One can recognise a VWFA domain in the interval 76–247 (DLYLVLDKSG…SALEGVVDPL (172 aa)). Positions 84, 86, and 150 each coordinate a divalent metal cation. Residues 364 to 384 (WLMFLPVLLVTLLLLCCTWKL) form a helical membrane-spanning segment. Over 385-641 (CIKPKKLPPP…FPPISKGPKF (257 aa)) the chain is Cytoplasmic. The tract at residues 391 to 455 (LPPPPPKPEK…ARPPPAPLPA (65 aa)) is disordered. Over residues 407–436 (PPPSSPPAPGRGPGPGPSAGPGPGPGPSPG) the composition is skewed to pro residues.

The protein belongs to the ATR family.

Its subcellular location is the membrane. The sequence is that of Anthrax toxin receptor-like (Antxrl) from Mus musculus (Mouse).